The chain runs to 104 residues: Small ribosomal subunit protein uS10 (104 aa).

This sequence belongs to the universal ribosomal protein uS10 family. Part of the 30S ribosomal subunit.

Functionally, involved in the binding of tRNA to the ribosomes. The protein is Small ribosomal subunit protein uS10 of Thermoplasma acidophilum (strain ATCC 25905 / DSM 1728 / JCM 9062 / NBRC 15155 / AMRC-C165).